A 101-amino-acid polypeptide reads, in one-letter code: Protein RADIALIS-like 2 (101 aa).

The SANT domain occupies 9–64 (YGSGSWTVKQNKAFERALAVYDQDTPDRWHNVARAVGGKTPEEAKRQYDLLVRDIE). Residues 69-101 (GHVPFPDYKTTTGNSNRGRLRDEEKRMRSMKLQ) form a disordered region.

As to expression, expressed in the funiculus of ovules and in embryos. In young ovules, expression is observed in the adaxial side of the funiculus (the stalk connecting the embryo sac to the placenta). Also expressed in heart-stage embryos, in the cortex and endodermis of the hypocotyl region but not in the cotyledons, shoot and root apical meristems, provasculature or epidermis. Not detected in young seedlings, mature roots or in young floral primordia.

The protein localises to the nucleus. Its function is as follows. Probable transcription factor. Required for female gametophyte development. The chain is Protein RADIALIS-like 2 (RL2) from Arabidopsis thaliana (Mouse-ear cress).